The primary structure comprises 396 residues: L-lactate dehydrogenase (396 aa).

The FMN hydroxy acid dehydrogenase domain occupies Met1–Gly380. Tyr24 is a binding site for substrate. FMN is bound by residues Ser106 and Gln127. Tyr129 lines the substrate pocket. Thr155 serves as a coordination point for FMN. Arg164 contributes to the substrate binding site. FMN is bound at residue Lys251. The active-site Proton acceptor is His275. Arg278 contacts substrate. An FMN-binding site is contributed by Asp306–Arg330.

It belongs to the FMN-dependent alpha-hydroxy acid dehydrogenase family. The cofactor is FMN.

Its subcellular location is the cell inner membrane. It catalyses the reaction (S)-lactate + A = pyruvate + AH2. In terms of biological role, catalyzes the conversion of L-lactate to pyruvate. Is coupled to the respiratory chain. The chain is L-lactate dehydrogenase from Salmonella newport (strain SL254).